Consider the following 197-residue polypeptide: Class A basic helix-loop-helix protein 15 (197 aa).

Residues 1–12 (MKTKNRPPRRRT) are compositionally biased toward basic residues. Disordered stretches follow at residues 1–82 (MKTK…ERER) and 178–197 (QPQG…REGS). Phosphothreonine is present on residues Thr12 and Thr25. Basic and acidic residues predominate over residues 65–82 (GRRENSVQRRLESNERER). Residues 72 to 124 (QRRLESNERERQRMHKLNNAFQALREVIPHVRADKKLSKIETLTLAKNYIKSL) form the bHLH domain.

In terms of assembly, forms homodimers or heterodimers with TCF3 gene products E12 and E47. These dimers bind to the E-box site, however, heterodimer with MYOD1 does not bind target DNA. Expressed in pancreatic tissue only in acinar cells. There is a complete absence of expression in intra- or interlobular pancreatic ducts and in all islet cells.

It is found in the nucleus. In terms of biological role, plays a role in controlling the transcriptional activity of MyoD, ensuring that expanding myoblast populations remain undifferentiated. Repression may occur through muscle-specific E-box occupancy by homodimers. May also negatively regulate bHLH-mediated transcription through an N-terminal repressor domain. Serves as a key regulator of acinar cell function, stability, and identity. Also required for normal organelle localization in exocrine cells and for mitochondrial calcium ion transport. May function as a unique regulator of gene expression in several different embryonic and postnatal cell lineages. Binds to the E-box consensus sequence 5'-CANNTG-3'. This chain is Class A basic helix-loop-helix protein 15 (Bhlha15), found in Mus musculus (Mouse).